Here is a 382-residue protein sequence, read N- to C-terminus: Diphosphomevalonate decarboxylase ERG19 (382 aa).

(R)-5-diphosphomevalonate is bound by residues 22 to 25, R78, 157 to 162, and T213; these read YWGK and SGSACR.

The protein belongs to the diphosphomevalonate decarboxylase family. Homodimer.

It carries out the reaction (R)-5-diphosphomevalonate + ATP = isopentenyl diphosphate + ADP + phosphate + CO2. It participates in isoprenoid biosynthesis; isopentenyl diphosphate biosynthesis via mevalonate pathway; isopentenyl diphosphate from (R)-mevalonate: step 3/3. In terms of biological role, diphosphomevalonate decarboxylase; part of the second module of ergosterol biosynthesis pathway that includes the middle steps of the pathway. MVD1 converts diphosphomevalonate into isopentenyl diphosphate. The second module is carried out in the vacuole and involves the formation of farnesyl diphosphate, which is also an important intermediate in the biosynthesis of ubiquinone, dolichol, heme and prenylated proteins. Activity by the mevalonate kinase ERG12 (FG05912) first converts mevalonate into 5-phosphomevalonate. 5-phosphomevalonate is then further converted to 5-diphosphomevalonate by the phosphomevalonate kinase ERG8 (FG09764). The diphosphomevalonate decarboxylase ERG19 (FG10424) then produces isopentenyl diphosphate. The isopentenyl-diphosphate delta-isomerase IDI1 (FG09722) then catalyzes the 1,3-allylic rearrangement of the homoallylic substrate isopentenyl (IPP) to its highly electrophilic allylic isomer, dimethylallyl diphosphate (DMAPP). Finally the farnesyl diphosphate synthase ERG20 (FG06784) catalyzes the sequential condensation of isopentenyl pyrophosphate with dimethylallyl pyrophosphate, and then with the resultant geranylpyrophosphate to the ultimate product farnesyl pyrophosphate. The polypeptide is Diphosphomevalonate decarboxylase ERG19 (Gibberella zeae (strain ATCC MYA-4620 / CBS 123657 / FGSC 9075 / NRRL 31084 / PH-1) (Wheat head blight fungus)).